The chain runs to 691 residues: Elongation factor G 2 (691 aa).

One can recognise a tr-type G domain in the interval 8–287 (DRYRNIGIMA…AVVDYLPSPL (280 aa)). Residues 17-24 (AHIDAGKT), 85-89 (DTPGH), and 139-142 (NKMD) each bind GTP.

This sequence belongs to the TRAFAC class translation factor GTPase superfamily. Classic translation factor GTPase family. EF-G/EF-2 subfamily.

It is found in the cytoplasm. In terms of biological role, catalyzes the GTP-dependent ribosomal translocation step during translation elongation. During this step, the ribosome changes from the pre-translocational (PRE) to the post-translocational (POST) state as the newly formed A-site-bound peptidyl-tRNA and P-site-bound deacylated tRNA move to the P and E sites, respectively. Catalyzes the coordinated movement of the two tRNA molecules, the mRNA and conformational changes in the ribosome. In Myxococcus xanthus (strain DK1622), this protein is Elongation factor G 2.